Consider the following 151-residue polypeptide: 3-hydroxyacyl-[acyl-carrier-protein] dehydratase FabZ (151 aa).

The active site involves His-56.

The protein belongs to the thioester dehydratase family. FabZ subfamily.

It localises to the cytoplasm. It carries out the reaction a (3R)-hydroxyacyl-[ACP] = a (2E)-enoyl-[ACP] + H2O. Functionally, involved in unsaturated fatty acids biosynthesis. Catalyzes the dehydration of short chain beta-hydroxyacyl-ACPs and long chain saturated and unsaturated beta-hydroxyacyl-ACPs. The sequence is that of 3-hydroxyacyl-[acyl-carrier-protein] dehydratase FabZ from Nitrobacter winogradskyi (strain ATCC 25391 / DSM 10237 / CIP 104748 / NCIMB 11846 / Nb-255).